Here is a 497-residue protein sequence, read N- to C-terminus: Guanosine-5'-triphosphate,3'-diphosphate pyrophosphatase (497 aa).

The protein belongs to the GppA/Ppx family. GppA subfamily.

The enzyme catalyses guanosine 3'-diphosphate 5'-triphosphate + H2O = guanosine 3',5'-bis(diphosphate) + phosphate + H(+). It functions in the pathway purine metabolism; ppGpp biosynthesis; ppGpp from GTP: step 2/2. Its function is as follows. Catalyzes the conversion of pppGpp to ppGpp. Guanosine pentaphosphate (pppGpp) is a cytoplasmic signaling molecule which together with ppGpp controls the 'stringent response', an adaptive process that allows bacteria to respond to amino acid starvation, resulting in the coordinated regulation of numerous cellular activities. The chain is Guanosine-5'-triphosphate,3'-diphosphate pyrophosphatase from Aliivibrio fischeri (strain ATCC 700601 / ES114) (Vibrio fischeri).